A 155-amino-acid polypeptide reads, in one-letter code: Glycosylation-dependent cell adhesion molecule 1 (155 aa).

An N-terminal signal peptide occupies residues 1–18 (MKFFAVLLLASLAATSLA). O-linked (GalNAc...) threonine glycosylation is present at T34. 5 positions are modified to phosphoserine: S48, S53, S57, S59, and S65. The tract at residues 74-109 (ARRHQNQNPKLLHPVPQESSFRNTATQSEETKELTP) is disordered. Residues 90–101 (QESSFRNTATQS) show a composition bias toward polar residues.

It belongs to the PP3/GlyCAM-1 family. As to expression, highly expressed in whey fraction of camel milk.

This Camelus dromedarius (Dromedary) protein is Glycosylation-dependent cell adhesion molecule 1 (GLYCAM1).